Consider the following 482-residue polypeptide: Chromosome stability protein 9 (482 aa).

Disordered regions lie at residues 239-263 (SSLR…VNKN) and 418-482 (SGLA…RRIR). A compositionally biased stretch (low complexity) spans 240–249 (SLRNSSKNNN). Over residues 250 to 263 (GTVTPSTSGRVNKN) the composition is skewed to polar residues. A compositionally biased stretch (low complexity) spans 418–437 (SGLAFSSSSNSLQQSKLPKS). 2 stretches are compositionally biased toward polar residues: residues 440–453 (LKRS…TNTH) and 463–473 (RSSNTVLGSSK).

As to quaternary structure, component of the synapsis initiation complex composed of at least ZIP2, ZIP3, MSH4 and MSH5. Also interacts with ZIP1, MRE11, RAD51 and RAD53.

The protein resides in the nucleus. It localises to the chromosome. Its function is as follows. Component of the synapsis initiation complex (SIC) necessary for the synaptonemal complex assembly. Stabilizes the ZIP2 component to the chromosomes. The SIC complex loads onto chromosomes and nucleates ZIP1 polymerization, a molecular zipper that acts to bring homologous chromosomes in close apposition, which is required for meiotic crossover. May also be involved in double strand break repair. The protein is Chromosome stability protein 9 (CST9) of Saccharomyces cerevisiae (strain ATCC 204508 / S288c) (Baker's yeast).